A 322-amino-acid chain; its full sequence is Phosphate acetyltransferase (322 aa).

This sequence belongs to the phosphate acetyltransferase and butyryltransferase family.

The protein localises to the cytoplasm. It catalyses the reaction acetyl-CoA + phosphate = acetyl phosphate + CoA. Its pathway is metabolic intermediate biosynthesis; acetyl-CoA biosynthesis; acetyl-CoA from acetate: step 2/2. This Mycoplasma capricolum subsp. capricolum (strain California kid / ATCC 27343 / NCTC 10154) protein is Phosphate acetyltransferase (pta).